Consider the following 396-residue polypeptide: Diphosphomevalonate decarboxylase (396 aa).

(R)-5-diphosphomevalonate-binding positions include 19 to 22 (YWGK), Arg-74, 153 to 158 (SGSACR), and Thr-209.

This sequence belongs to the diphosphomevalonate decarboxylase family. Homodimer.

It catalyses the reaction (R)-5-diphosphomevalonate + ATP = isopentenyl diphosphate + ADP + phosphate + CO2. The protein operates within isoprenoid biosynthesis; isopentenyl diphosphate biosynthesis via mevalonate pathway; isopentenyl diphosphate from (R)-mevalonate: step 3/3. Its function is as follows. Diphosphomevalonate decarboxylase; part of the second module of ergosterol biosynthesis pathway that includes the middle steps of the pathway. MVD1/ERG19 converts diphosphomevalonate into isopentenyl diphosphate. The second module is carried out in the vacuole and involves the formation of farnesyl diphosphate, which is also an important intermediate in the biosynthesis of ubiquinone, dolichol, heme and prenylated proteins. Activity by the mevalonate kinase ERG12 first converts mevalonate into 5-phosphomevalonate. 5-phosphomevalonate is then further converted to 5-diphosphomevalonate by the phosphomevalonate kinase ERG8. The diphosphomevalonate decarboxylase MVD1/ERG19 then produces isopentenyl diphosphate. The isopentenyl-diphosphate delta-isomerase IDI1 then catalyzes the 1,3-allylic rearrangement of the homoallylic substrate isopentenyl (IPP) to its highly electrophilic allylic isomer, dimethylallyl diphosphate (DMAPP). Finally the farnesyl diphosphate synthase ERG20 catalyzes the sequential condensation of isopentenyl pyrophosphate with dimethylallyl pyrophosphate, and then with the resultant geranylpyrophosphate to the ultimate product farnesyl pyrophosphate. This Saccharomyces cerevisiae (strain ATCC 204508 / S288c) (Baker's yeast) protein is Diphosphomevalonate decarboxylase.